A 225-amino-acid polypeptide reads, in one-letter code: Heptaprenylglyceryl phosphate synthase (225 aa).

Position 6 (Lys6) interacts with sn-glycerol 1-phosphate. Residues Asp8 and Thr34 each contribute to the Mg(2+) site. Residues 153-158 (YIEYSG), Gly183, and 203-204 (GN) contribute to the sn-glycerol 1-phosphate site.

The protein belongs to the GGGP/HepGP synthase family. Group I subfamily. In terms of assembly, homodimer. Requires Mg(2+) as cofactor.

It catalyses the reaction sn-glycerol 1-phosphate + all-trans-heptaprenyl diphosphate = 3-heptaprenyl-sn-glycero-1-phosphate + diphosphate. It functions in the pathway membrane lipid metabolism; glycerophospholipid metabolism. Its function is as follows. Prenyltransferase that catalyzes in vivo the transfer of the heptaprenyl moiety of heptaprenyl pyrophosphate (HepPP; 35 carbon atoms) to the C3 hydroxyl of sn-glycerol-1-phosphate (G1P), producing heptaprenylglyceryl phosphate (HepGP). This reaction is an ether-bond-formation step in the biosynthesis of archaea-type G1P-based membrane lipids found in Bacillales. This is Heptaprenylglyceryl phosphate synthase from Listeria welshimeri serovar 6b (strain ATCC 35897 / DSM 20650 / CCUG 15529 / CIP 8149 / NCTC 11857 / SLCC 5334 / V8).